Consider the following 624-residue polypeptide: DNA mismatch repair protein MutL (624 aa).

Residues 355–377 (EESAPERKLPEKTPEPSYSPMKL) are disordered. Residues 358–368 (APERKLPEKTP) are compositionally biased toward basic and acidic residues.

It belongs to the DNA mismatch repair MutL/HexB family.

This protein is involved in the repair of mismatches in DNA. It is required for dam-dependent methyl-directed DNA mismatch repair. May act as a 'molecular matchmaker', a protein that promotes the formation of a stable complex between two or more DNA-binding proteins in an ATP-dependent manner without itself being part of a final effector complex. This Bacillus velezensis (strain DSM 23117 / BGSC 10A6 / LMG 26770 / FZB42) (Bacillus amyloliquefaciens subsp. plantarum) protein is DNA mismatch repair protein MutL.